Reading from the N-terminus, the 87-residue chain is Phosphoribosyl-ATP pyrophosphatase (87 aa).

Belongs to the PRA-PH family.

The protein localises to the cytoplasm. The enzyme catalyses 1-(5-phospho-beta-D-ribosyl)-ATP + H2O = 1-(5-phospho-beta-D-ribosyl)-5'-AMP + diphosphate + H(+). The protein operates within amino-acid biosynthesis; L-histidine biosynthesis; L-histidine from 5-phospho-alpha-D-ribose 1-diphosphate: step 2/9. This is Phosphoribosyl-ATP pyrophosphatase from Corynebacterium diphtheriae (strain ATCC 700971 / NCTC 13129 / Biotype gravis).